The sequence spans 59 residues: Inner kinetochore subunit fta6 (59 aa).

In terms of assembly, component of the inner kinetochore constitutive centromere-associated network (CCAN) (also known as central kinetochore Sim4 complex in fission yeast), which is composed of at least cnl2, cnp3, cnp20, fta1, fta2, fta3, fta4, fta6, fta7, mal2, mhf1, mhf2, mis6, mis15, mis17, sim4 and wip1.

It is found in the nucleus. The protein resides in the chromosome. It localises to the centromere. Its subcellular location is the kinetochore. The protein localises to the cytoplasm. It is found in the cytoskeleton. The protein resides in the microtubule organizing center. It localises to the spindle pole body. In terms of biological role, component of the kinetochore, a multiprotein complex that assembles on centromeric DNA and attaches chromosomes to spindle microtubules, mediating chromosome segregation and sister chromatid segregation during meiosis and mitosis. Component of the inner kinetochore constitutive centromere-associated network (CCAN), which serves as a structural platform for outer kinetochore assembly. This Schizosaccharomyces pombe (strain 972 / ATCC 24843) (Fission yeast) protein is Inner kinetochore subunit fta6 (fta6).